The sequence spans 478 residues: NAD-dependent malic enzyme (478 aa).

The region spanning 12–86 is the ACT domain; that stretch reads TIRLQFEKDI…GVKIVNVSDR (75 aa). The Proton donor role is filled by Y114. The active-site Proton acceptor is K169. The a divalent metal cation site is built by E211, D212, and D237. NAD(+)-binding positions include 270–273, N363, and N393; that span reads IGAA.

The protein belongs to the malic enzymes family. As to quaternary structure, homotetramer. It depends on Mg(2+) as a cofactor. The cofactor is Mn(2+).

The enzyme catalyses (S)-malate + NAD(+) = pyruvate + CO2 + NADH. The catalysed reaction is oxaloacetate + H(+) = pyruvate + CO2. With respect to regulation, the activity is enhanced 5-7 times by ammonium and potassium. Functionally, in addition to the NAD-dependent oxidative decarboxylation of L-malate, the enzyme catalyzes the decarboxylation of oxaloacetate. This Geobacillus stearothermophilus (Bacillus stearothermophilus) protein is NAD-dependent malic enzyme.